The sequence spans 448 residues: Protein kinase C and casein kinase substrate in neurons protein 2 (448 aa).

The F-BAR domain maps to 11–282 (VEVSSDSFWE…NIKTADAVED (272 aa)). A coiled-coil region spans residues 25-274 (KRTVKRIDDG…NIYRELEQNI (250 aa)). The interval 315–386 (SRREKKKASD…DTNPFDEDTS (72 aa)) is disordered. Over residues 329-358 (TGINQTGDQVSQPNKHSSVSSYEKNQSYPT) the composition is skewed to polar residues. The NPF1 motif lies at 367-369 (NPF). An NPF2 motif is present at residues 379–381 (NPF). The 61-residue stretch at 388–448 (VMEVRVRALY…YPANYVEPIQ (61 aa)) folds into the SH3 domain.

Belongs to the PACSIN family. Phosphorylated on serine residues. Detected in intestine, cardiac muscle, lung and brain (at protein level). Expressed in all tissues tested, including, gizzard, liver, cardiac muscle, skeletal muscle and skin.

The protein resides in the cytoplasm. The protein localises to the cytoskeleton. It localises to the cytoplasmic vesicle membrane. It is found in the cell projection. Its subcellular location is the ruffle membrane. The protein resides in the early endosome. The protein localises to the recycling endosome membrane. It localises to the cell membrane. It is found in the membrane. Its subcellular location is the caveola. The protein resides in the cell junction. The protein localises to the focal adhesion. Its function is as follows. Regulates the morphogenesis and endocytosis of caveolae. Lipid-binding protein that is able to promote the tubulation of the phosphatidic acid-containing membranes it preferentially binds. Plays a role in intracellular vesicle-mediated transport. Involved in the endocytosis of cell-surface receptors like the EGF receptor, contributing to its internalization in the absence of EGF stimulus. Essential for endothelial organization in sprouting angiogenesis, modulates CDH5-based junctions. Facilitates endothelial front-rear polarity during migration by recruiting EHD4 and MICALL1 to asymmetric adherens junctions between leader and follower cells. The polypeptide is Protein kinase C and casein kinase substrate in neurons protein 2 (PACSIN2) (Gallus gallus (Chicken)).